We begin with the raw amino-acid sequence, 143 residues long: S-adenosylmethionine decarboxylase proenzyme (143 aa).

Residue serine 66 is the Schiff-base intermediate with substrate; via pyruvic acid of the active site. The residue at position 66 (serine 66) is a Pyruvic acid (Ser); by autocatalysis. Histidine 71 serves as the catalytic Proton acceptor; for processing activity. The active-site Proton donor; for catalytic activity is the cysteine 86.

Belongs to the prokaryotic AdoMetDC family. Type 1 subfamily. In terms of assembly, heterotetramer of two alpha and two beta chains arranged as a dimer of alpha/beta heterodimers. Requires pyruvate as cofactor. In terms of processing, is synthesized initially as an inactive proenzyme. Formation of the active enzyme involves a self-maturation process in which the active site pyruvoyl group is generated from an internal serine residue via an autocatalytic post-translational modification. Two non-identical subunits are generated from the proenzyme in this reaction, and the pyruvate is formed at the N-terminus of the alpha chain, which is derived from the carboxyl end of the proenzyme. The post-translation cleavage follows an unusual pathway, termed non-hydrolytic serinolysis, in which the side chain hydroxyl group of the serine supplies its oxygen atom to form the C-terminus of the beta chain, while the remainder of the serine residue undergoes an oxidative deamination to produce ammonia and the pyruvoyl group blocking the N-terminus of the alpha chain.

It carries out the reaction S-adenosyl-L-methionine + H(+) = S-adenosyl 3-(methylsulfanyl)propylamine + CO2. Its pathway is amine and polyamine biosynthesis; S-adenosylmethioninamine biosynthesis; S-adenosylmethioninamine from S-adenosyl-L-methionine: step 1/1. In terms of biological role, catalyzes the decarboxylation of S-adenosylmethionine to S-adenosylmethioninamine (dcAdoMet), the propylamine donor required for the synthesis of the polyamines spermine and spermidine from the diamine putrescine. The chain is S-adenosylmethionine decarboxylase proenzyme from Thermococcus kodakarensis (strain ATCC BAA-918 / JCM 12380 / KOD1) (Pyrococcus kodakaraensis (strain KOD1)).